The primary structure comprises 357 residues: Arginine kinase Met e 2 (357 aa).

The Phosphagen kinase N-terminal domain occupies Lys9 to Val91. An L-arginine-binding site is contributed by Gly64–Tyr68. The Phosphagen kinase C-terminal domain occupies Phe119–Met356. ATP-binding positions include Ser122–Arg126 and His185. Glu225 provides a ligand contact to L-arginine. Arg229 contacts ATP. Position 271 (Cys271) interacts with L-arginine. Residues Arg280–His284 and Arg309–Glu314 each bind ATP. Glu314 is a binding site for L-arginine.

Belongs to the ATP:guanido phosphotransferase family.

The catalysed reaction is L-arginine + ATP = N(omega)-phospho-L-arginine + ADP + H(+). In terms of biological role, catalyzes the reversible transfer of high energy ATP gamma-phosphate group to L-arginine. This is Arginine kinase Met e 2 from Metapenaeus ensis (Greasyback shrimp).